Here is a 2031-residue protein sequence, read N- to C-terminus: Pericentriolar material 1 protein (2031 aa).

Disordered regions lie at residues 1 to 82 (MATG…HTFP) and 111 to 165 (DQRS…STRS). Residues 1-484 (MATGGGPPDE…RSTEQRTLGS (484 aa)) form a self-association region. The span at 42–58 (RSAEKNKKKFVECDLRL) shows a compositional bias: basic and acidic residues. The segment covering 114-130 (SIGSDSQGRATAANNKR) has biased composition (polar residues). The segment covering 149–162 (NKEKSKSPPKREAS) has biased composition (basic and acidic residues). A coiled-coil region spans residues 302 to 394 (RQEAKEELKN…FHNQLHDSED (93 aa)). Residues 469–494 (SSVSPRRSTEQRTLGSAVSSALTSDN) are compositionally biased toward polar residues. Residues 469–495 (SSVSPRRSTEQRTLGSAVSSALTSDNR) are disordered. A coiled-coil region spans residues 523 to 549 (AEKLKKLKEVRKRLNELRELVHYYEQT). Disordered regions lie at residues 550–590 (SDMM…NPQY) and 649–678 (KEEDGNRELDDEDAEDQGSRASLSSQNSVA). Positions 562–580 (KDEDETEDSEYDSEQEDAE) are enriched in acidic residues. Composition is skewed to polar residues over residues 581-590 (PTTNIRNPQY) and 667-677 (SRASLSSQNSV). The stretch at 684–711 (VDFEQKFNRLVAAKQKLKQLQDLVAMYG) forms a coiled coil. The tract at residues 712 to 752 (DDSESEPVAPERSFSGDQFPPEATTLKQQPNNTRPNVSKAQ) is disordered. Polar residues predominate over residues 736 to 750 (TLKQQPNNTRPNVSK). Positions 745–1271 (RPNVSKAQKD…PACFGAGLSA (527 aa)) are self-association and localization to centrosomes. Residues 757–805 (LKEQAREKFYESKLQQQQRELSQLQEERKKLIEIQEKIQTLRKACPDLQ) adopt a coiled-coil conformation. Polar residues-rich tracts occupy residues 806–823 (LSTSSAGTNPANRQNRQM) and 888–898 (QGNTETTSAAS). 2 disordered regions span residues 806–835 (LSTSSAGTNPANRQNRQMTTTTSTPDVNTN) and 882–1014 (AEHQ…VSMR). Residues 858–892 (SEIRKHQILREDLRQRRKQLETLMAEHQRRQGNTE) are a coiled coil. Residues 930 to 945 (LEEEEEEEEVDDEECL) are compositionally biased toward acidic residues. Polar residues-rich tracts occupy residues 960 to 981 (NTSCENNSYPQNSIRKTSFNGR) and 1004 to 1013 (KTRQQQNVSM). The stretch at 1025–1049 (LSHVEEKEHWQEQIDQIKKQLDYST) forms a coiled coil. 4 disordered regions span residues 1123 to 1146 (QHLQGESHQREDRGSSAPPLTSPN), 1219 to 1247 (KPFESHRSNSTEKERNPPKKPDESEQGRR), 1318 to 1345 (SAQASLASKDKTPKAKNKKRKVFHQKSK), and 1514 to 1533 (PVCQEGEQNDGDNISSLSTS). Composition is skewed to basic and acidic residues over residues 1127–1136 (GESHQREDRG) and 1221–1247 (FESHRSNSTEKERNPPKKPDESEQGRR). A compositionally biased stretch (basic residues) spans 1331 to 1345 (KAKNKKRKVFHQKSK). Residues 1524–1533 (GDNISSLSTS) show a composition bias toward polar residues. Positions 1550-1599 (HFDQALARMREYERMKSETENGLVADCCNNLNAAASSLEGTNDEARGRAQ) form a coiled coil. Disordered regions lie at residues 1746 to 1802 (ADKE…DLDE), 1817 to 1870 (ALTN…EANI), 1922 to 1965 (NNVK…DEDD), and 2007 to 2031 (ENGADQLAGDPLALKEPDSPAIHPA). A compositionally biased stretch (basic and acidic residues) spans 1771-1784 (KDETETAEENRNFD). The span at 1824–1835 (GEDENEDEENYE) shows a compositional bias: acidic residues. 2 stretches are compositionally biased toward polar residues: residues 1843–1852 (VQTSLETSSE) and 1922–1942 (NNVKSPVDSPGTSGAGSSDTE).

This sequence belongs to the PCM1 family. Self-associates. Interacts with cetn3.

Its subcellular location is the cytoplasm. It is found in the cytoskeleton. It localises to the microtubule organizing center. The protein resides in the centrosome. The protein localises to the cytoplasmic granule. Its subcellular location is the centriolar satellite. It is found in the cilium basal body. Required to anchor microtubules to the centrosome. Required for centrosome assembly and function. Essential for the correct localization of several centrosomal proteins including cetn3 and pcnt. Probably involved in the biogenesis of cilia. The polypeptide is Pericentriolar material 1 protein (pcm1) (Xenopus laevis (African clawed frog)).